An 84-amino-acid chain; its full sequence is Small ribosomal subunit protein uS17 (84 aa).

It belongs to the universal ribosomal protein uS17 family. In terms of assembly, part of the 30S ribosomal subunit.

Its function is as follows. One of the primary rRNA binding proteins, it binds specifically to the 5'-end of 16S ribosomal RNA. The sequence is that of Small ribosomal subunit protein uS17 from Clostridium acetobutylicum (strain ATCC 824 / DSM 792 / JCM 1419 / IAM 19013 / LMG 5710 / NBRC 13948 / NRRL B-527 / VKM B-1787 / 2291 / W).